The chain runs to 280 residues: MTPSAGLGLKSQHYGDAIACDAEGLWFEVHPENYMSAGGPRLAALEAVRARRPVSLHGVGLSLAADTDPDPEHLQALKRLVDRFDPFVVSEHLAWSTHRGAHHPDLLPFPRTRAALDRICGNVARMQDALQRRVLIENPSLYLPLKGHALDEVDFLEALATRTGCGLLVDVNNVFVSAQNLGYAPETYLDALPAHAIGEIHLAGHAPDPGGSNLLIDTHGAPVAEVVWTLYARLIARIGPRPTLIERDDDIPDFAALMAERNRAVAVLASGQTAREPAHV.

Belongs to the UPF0276 family.

The sequence is that of UPF0276 protein CC_3255 from Caulobacter vibrioides (strain ATCC 19089 / CIP 103742 / CB 15) (Caulobacter crescentus).